Reading from the N-terminus, the 120-residue chain is Protein CcdB (120 aa).

The Response regulatory domain occupies Arg-3 to Met-118. A 4-aspartylphosphate modification is found at Asp-53.

The chain is Protein CcdB (ccdB) from Bacillus subtilis (strain 168).